A 355-amino-acid polypeptide reads, in one-letter code: Holliday junction branch migration complex subunit RuvB (355 aa).

Positions 4–190 (TDKLAAERII…FGIVARLEFY (187 aa)) are large ATPase domain (RuvB-L). ATP-binding positions include Leu29, Arg30, Gly71, Lys74, Thr75, Thr76, 137–139 (EDY), Arg180, Tyr190, and Arg227. Position 75 (Thr75) interacts with Mg(2+). A small ATPAse domain (RuvB-S) region spans residues 191 to 261 (DADQLSRIVQ…IADAALAMLD (71 aa)). Positions 264–355 (PVGFDLMDRK…QSIWDTPDAQ (92 aa)) are head domain (RuvB-H). The DNA site is built by Arg300, Arg319, and Arg324.

Belongs to the RuvB family. In terms of assembly, homohexamer. Forms an RuvA(8)-RuvB(12)-Holliday junction (HJ) complex. HJ DNA is sandwiched between 2 RuvA tetramers; dsDNA enters through RuvA and exits via RuvB. An RuvB hexamer assembles on each DNA strand where it exits the tetramer. Each RuvB hexamer is contacted by two RuvA subunits (via domain III) on 2 adjacent RuvB subunits; this complex drives branch migration. In the full resolvosome a probable DNA-RuvA(4)-RuvB(12)-RuvC(2) complex forms which resolves the HJ.

It localises to the cytoplasm. The enzyme catalyses ATP + H2O = ADP + phosphate + H(+). Its function is as follows. The RuvA-RuvB-RuvC complex processes Holliday junction (HJ) DNA during genetic recombination and DNA repair, while the RuvA-RuvB complex plays an important role in the rescue of blocked DNA replication forks via replication fork reversal (RFR). RuvA specifically binds to HJ cruciform DNA, conferring on it an open structure. The RuvB hexamer acts as an ATP-dependent pump, pulling dsDNA into and through the RuvAB complex. RuvB forms 2 homohexamers on either side of HJ DNA bound by 1 or 2 RuvA tetramers; 4 subunits per hexamer contact DNA at a time. Coordinated motions by a converter formed by DNA-disengaged RuvB subunits stimulates ATP hydrolysis and nucleotide exchange. Immobilization of the converter enables RuvB to convert the ATP-contained energy into a lever motion, pulling 2 nucleotides of DNA out of the RuvA tetramer per ATP hydrolyzed, thus driving DNA branch migration. The RuvB motors rotate together with the DNA substrate, which together with the progressing nucleotide cycle form the mechanistic basis for DNA recombination by continuous HJ branch migration. Branch migration allows RuvC to scan DNA until it finds its consensus sequence, where it cleaves and resolves cruciform DNA. The protein is Holliday junction branch migration complex subunit RuvB of Burkholderia multivorans (strain ATCC 17616 / 249).